Here is a 98-residue protein sequence, read N- to C-terminus: NADH-ubiquinone oxidoreductase chain 4L (98 aa).

Transmembrane regions (helical) follow at residues 1–21 (MPLI…GMLI), 29–49 (SLLC…LMAL), and 61–81 (VVLL…LVSI).

Belongs to the complex I subunit 4L family. As to quaternary structure, core subunit of respiratory chain NADH dehydrogenase (Complex I) which is composed of 45 different subunits.

It localises to the mitochondrion inner membrane. It catalyses the reaction a ubiquinone + NADH + 5 H(+)(in) = a ubiquinol + NAD(+) + 4 H(+)(out). Core subunit of the mitochondrial membrane respiratory chain NADH dehydrogenase (Complex I) which catalyzes electron transfer from NADH through the respiratory chain, using ubiquinone as an electron acceptor. Part of the enzyme membrane arm which is embedded in the lipid bilayer and involved in proton translocation. The sequence is that of NADH-ubiquinone oxidoreductase chain 4L (MT-ND4L) from Hylobates lar (Lar gibbon).